A 362-amino-acid chain; its full sequence is 3-dehydroquinate synthase (362 aa).

NAD(+) contacts are provided by residues 71-76 (DGEQYK), 105-109 (GVVGD), 129-130 (TT), K142, K151, and 169-172 (CLKT). The Zn(2+) site is built by E184, H247, and H264.

The protein belongs to the sugar phosphate cyclases superfamily. Dehydroquinate synthase family. Co(2+) is required as a cofactor. It depends on Zn(2+) as a cofactor. The cofactor is NAD(+).

Its subcellular location is the cytoplasm. It carries out the reaction 7-phospho-2-dehydro-3-deoxy-D-arabino-heptonate = 3-dehydroquinate + phosphate. It participates in metabolic intermediate biosynthesis; chorismate biosynthesis; chorismate from D-erythrose 4-phosphate and phosphoenolpyruvate: step 2/7. Catalyzes the conversion of 3-deoxy-D-arabino-heptulosonate 7-phosphate (DAHP) to dehydroquinate (DHQ). In Escherichia coli O127:H6 (strain E2348/69 / EPEC), this protein is 3-dehydroquinate synthase.